Consider the following 932-residue polypeptide: DNA mismatch repair protein MutS (932 aa).

Position 615-622 (615-622 (GPNMAGKS)) interacts with ATP.

This sequence belongs to the DNA mismatch repair MutS family.

Its function is as follows. This protein is involved in the repair of mismatches in DNA. It is possible that it carries out the mismatch recognition step. This protein has a weak ATPase activity. The chain is DNA mismatch repair protein MutS from Clostridium botulinum (strain 657 / Type Ba4).